The primary structure comprises 209 residues: Large ribosomal subunit protein uL3 (209 aa).

The segment at 130-154 (RGPMSHGSKFHRAVGSMGASSDPSR) is disordered.

It belongs to the universal ribosomal protein uL3 family. As to quaternary structure, part of the 50S ribosomal subunit. Forms a cluster with proteins L14 and L19.

In terms of biological role, one of the primary rRNA binding proteins, it binds directly near the 3'-end of the 23S rRNA, where it nucleates assembly of the 50S subunit. The protein is Large ribosomal subunit protein uL3 of Clostridium kluyveri (strain NBRC 12016).